We begin with the raw amino-acid sequence, 77 residues long: Cell division topological specificity factor (77 aa).

This sequence belongs to the MinE family.

In terms of biological role, prevents the cell division inhibition by proteins MinC and MinD at internal division sites while permitting inhibition at polar sites. This ensures cell division at the proper site by restricting the formation of a division septum at the midpoint of the long axis of the cell. The chain is Cell division topological specificity factor from Nautilia profundicola (strain ATCC BAA-1463 / DSM 18972 / AmH).